Consider the following 362-residue polypeptide: Phosphoserine aminotransferase (362 aa).

Positions 9 and 42 each coordinate L-glutamate. Residues 76–77 (GR), W102, T153, D174, and Q197 each bind pyridoxal 5'-phosphate. K198 is modified (N6-(pyridoxal phosphate)lysine). 239–240 (NT) is a pyridoxal 5'-phosphate binding site.

This sequence belongs to the class-V pyridoxal-phosphate-dependent aminotransferase family. SerC subfamily. Homodimer. Pyridoxal 5'-phosphate is required as a cofactor.

It localises to the cytoplasm. The enzyme catalyses O-phospho-L-serine + 2-oxoglutarate = 3-phosphooxypyruvate + L-glutamate. It catalyses the reaction 4-(phosphooxy)-L-threonine + 2-oxoglutarate = (R)-3-hydroxy-2-oxo-4-phosphooxybutanoate + L-glutamate. It functions in the pathway amino-acid biosynthesis; L-serine biosynthesis; L-serine from 3-phospho-D-glycerate: step 2/3. The protein operates within cofactor biosynthesis; pyridoxine 5'-phosphate biosynthesis; pyridoxine 5'-phosphate from D-erythrose 4-phosphate: step 3/5. In terms of biological role, catalyzes the reversible conversion of 3-phosphohydroxypyruvate to phosphoserine and of 3-hydroxy-2-oxo-4-phosphonooxybutanoate to phosphohydroxythreonine. The protein is Phosphoserine aminotransferase of Klebsiella pneumoniae (strain 342).